A 599-amino-acid chain; its full sequence is Aspartate--tRNA(Asp/Asn) ligase (599 aa).

L-aspartate is bound at residue glutamate 172. Residues 196 to 199 form an aspartate region; sequence QLFK. Arginine 218 contributes to the L-aspartate binding site. ATP is bound by residues 218 to 220 and glutamine 227; that span reads RDE. Histidine 454 serves as a coordination point for L-aspartate. Position 488 (glutamate 488) interacts with ATP. Arginine 495 contacts L-aspartate. 540 to 543 contributes to the ATP binding site; that stretch reads GLDR.

The protein belongs to the class-II aminoacyl-tRNA synthetase family. Type 1 subfamily. As to quaternary structure, homodimer.

The protein resides in the cytoplasm. It catalyses the reaction tRNA(Asx) + L-aspartate + ATP = L-aspartyl-tRNA(Asx) + AMP + diphosphate. In terms of biological role, aspartyl-tRNA synthetase with relaxed tRNA specificity since it is able to aspartylate not only its cognate tRNA(Asp) but also tRNA(Asn). Reaction proceeds in two steps: L-aspartate is first activated by ATP to form Asp-AMP and then transferred to the acceptor end of tRNA(Asp/Asn). The polypeptide is Aspartate--tRNA(Asp/Asn) ligase (Methylibium petroleiphilum (strain ATCC BAA-1232 / LMG 22953 / PM1)).